Consider the following 451-residue polypeptide: Potassium/sodium uptake protein NtpJ (451 aa).

11 consecutive transmembrane segments (helical) span residues 18-38 (IAAG…LPFF), 46-66 (HFID…LTTL), 78-98 (FLIM…PILF), 133-153 (ILKF…VVFI), 162-182 (IWFS…DLLG), 192-212 (VYLI…FIVW), 230-250 (VALS…LITE), 293-313 (LILT…AGGL), 350-370 (ALTL…VLSV), 380-400 (IEYI…TMGL), and 410-430 (LVII…VFSL).

Belongs to the TrkH potassium transport family.

The protein resides in the cell membrane. Its function is as follows. Mediates electrogenic transport of potassium as well as sodium. Acts probably as a potassium-sodium cotransporter. Major sodium reentry pathway at high pH values. This is Potassium/sodium uptake protein NtpJ (ntpJ) from Enterococcus hirae (strain ATCC 9790 / DSM 20160 / JCM 8729 / LMG 6399 / NBRC 3181 / NCIMB 6459 / NCDO 1258 / NCTC 12367 / WDCM 00089 / R).